The following is a 272-amino-acid chain: Carbonic anhydrase (272 aa).

3 residues coordinate Zn(2+): cysteine 39, histidine 98, and cysteine 101.

The protein belongs to the beta-class carbonic anhydrase family. As to quaternary structure, a hexamer formed by a trimer of dimers. Purified from carboxysomes with the both RuBisCO subunits and the full-length form of CcmM, probably interacts with the N-terminus of CcmM. Zn(2+) serves as cofactor.

Its subcellular location is the carboxysome. The catalysed reaction is hydrogencarbonate + H(+) = CO2 + H2O. In terms of biological role, reversible hydration of carbon dioxide. Essential to photosynthetic carbon dioxide fixation, supplies CO(2) to RuBisCO (ribulose bisphosphate carboxylase, rbcL-rbcS) in the carboxysome. Loss of activity results in limitation of CO(2) availability to RuBisCO located in the cytoplasm. This is Carbonic anhydrase from Synechococcus elongatus (strain ATCC 33912 / PCC 7942 / FACHB-805) (Anacystis nidulans R2).